Reading from the N-terminus, the 114-residue chain is MICOS complex subunit MIC12 (114 aa).

Residues Ile4–Ile26 traverse the membrane as a helical segment.

This sequence belongs to the MICOS complex subunit Mic12 family. In terms of assembly, component of the mitochondrial contact site and cristae organizing system (MICOS) complex.

The protein localises to the mitochondrion inner membrane. Its function is as follows. Component of the MICOS complex, a large protein complex of the mitochondrial inner membrane that plays crucial roles in the maintenance of crista junctions, inner membrane architecture, and formation of contact sites to the outer membrane. This chain is MICOS complex subunit MIC12 (AIM5), found in Candida glabrata (strain ATCC 2001 / BCRC 20586 / JCM 3761 / NBRC 0622 / NRRL Y-65 / CBS 138) (Yeast).